Consider the following 931-residue polypeptide: Probable UDP-N-acetylglucosamine--peptide N-acetylglucosaminyltransferase SPINDLY (931 aa).

Residues 1–15 (MAWTEKDVENGKESE) show a composition bias toward basic and acidic residues. The interval 1-38 (MAWTEKDVENGKESESLGNNGFLKGGQSSSGSKGSPGR) is disordered. The span at 25 to 37 (GGQSSSGSKGSPG) shows a compositional bias: low complexity. TPR repeat units follow at residues 48-81 (DKDAITYANILRSRNKFVDALAIYESVLEKDSKS), 82-115 (IESLIGKGICLQMQNTGRLAFESFSEAIKVDPQN), 116-149 (ACALTHCGILYKDEGRLVEAAESYEKALKADPSY), 157-190 (AIVLTDIGTSLKLAGNTQEGIQKYYEAIKIDSHY), 191-224 (APAYYNLGVVYSEMMQYDMALNCYEKAALERPMY), 225-258 (AEAYCNMGVIFKNRGDLESAIACYERCLAVSPNF), 266-299 (AIALTDLGTKVKLEGDINQGVAYYKKALCYNWHY), 300-333 (ADAMYNLGVAYGEMLKFDMAIVFYELAFHFNPHC), 334-367 (AEACNNLGVIYKDRDNLDKAVECYQLALSIKPNF), 369-401 (QSLNNLGVVYTVQGKMDAAASMIEKAIIANPTY), and 402-435 (AEAYNNLGVLYRDAGNISLAIEAYEQCLKIDPDS). A catalytic region region spans residues 436-931 (RNAGQNRLLA…NHNGNHGNLS (496 aa)). Residues 864–884 (QQQQTQTESVVPEESSVNPSE) are compositionally biased toward low complexity. The interval 864-931 (QQQQTQTESV…NHNGNHGNLS (68 aa)) is disordered. Polar residues predominate over residues 910-931 (KSSTSEENGVQSNHNGNHGNLS).

It belongs to the glycosyltransferase 41 family. O-GlcNAc transferase subfamily.

It localises to the nucleus. It carries out the reaction L-seryl-[protein] + UDP-N-acetyl-alpha-D-glucosamine = 3-O-(N-acetyl-beta-D-glucosaminyl)-L-seryl-[protein] + UDP + H(+). It catalyses the reaction L-threonyl-[protein] + UDP-N-acetyl-alpha-D-glucosamine = 3-O-(N-acetyl-beta-D-glucosaminyl)-L-threonyl-[protein] + UDP + H(+). The protein operates within protein modification; protein glycosylation. Functionally, probable O-linked N-acetylglucosamine transferase (OGT) involved in various processes such as gibberellin (GA) signaling pathway. OGTs catalyze the addition of nucleotide-activated sugars directly onto the polypeptide through O-glycosidic linkage with the hydroxyl of serine or threonine. Probably acts by adding O-linked sugars to yet unknown proteins. This Solanum lycopersicum (Tomato) protein is Probable UDP-N-acetylglucosamine--peptide N-acetylglucosaminyltransferase SPINDLY (SPY).